A 618-amino-acid polypeptide reads, in one-letter code: Serine--tRNA ligase, cytoplasmic (618 aa).

417-419 contacts L-serine; the sequence is TSE. Residue 448–450 coordinates ATP; sequence RTE. An L-serine-binding site is contributed by Glu472. An ATP-binding site is contributed by 536–539; the sequence is EVSS. Ser570 contributes to the L-serine binding site.

Belongs to the class-II aminoacyl-tRNA synthetase family. Type-1 seryl-tRNA synthetase subfamily. Homodimer. The tRNA molecule binds across the dimer.

The protein resides in the cytoplasm. It carries out the reaction tRNA(Ser) + L-serine + ATP = L-seryl-tRNA(Ser) + AMP + diphosphate + H(+). The enzyme catalyses tRNA(Sec) + L-serine + ATP = L-seryl-tRNA(Sec) + AMP + diphosphate + H(+). Its pathway is aminoacyl-tRNA biosynthesis; selenocysteinyl-tRNA(Sec) biosynthesis; L-seryl-tRNA(Sec) from L-serine and tRNA(Sec): step 1/1. Its function is as follows. Catalyzes the attachment of serine to tRNA(Ser). Is also able to aminoacylate tRNA(Sec) with serine, to form the misacylated tRNA L-seryl-tRNA(Sec), which will be further converted into selenocysteinyl-tRNA(Sec). This chain is Serine--tRNA ligase, cytoplasmic, found in Plasmodium falciparum (isolate 3D7).